The chain runs to 246 residues: 2-deoxyglucose-6-phosphate phosphatase 2 (246 aa).

The Nucleophile role is filled by Asp83. Asp83 is a binding site for Mg(2+). Residues Asp83, Glu92, and 146–149 (DVKN) each bind substrate. Mg(2+) is bound at residue Asp183.

It belongs to the HAD-like hydrolase superfamily. DOG/GPP family. The cofactor is Mg(2+).

The enzyme catalyses 2-deoxy-D-glucose 6-phosphate + H2O = 2-deoxy-D-glucose + phosphate. In terms of biological role, phosphatase that is active on 2-deoxy-D-glucose 6-phosphate (2-DOG-6P), but not very active on fructose-1-P. This Saccharomyces cerevisiae (strain ATCC 204508 / S288c) (Baker's yeast) protein is 2-deoxyglucose-6-phosphate phosphatase 2.